The chain runs to 589 residues: LRR receptor-like serine/threonine-protein kinase FEI 2 (589 aa).

A signal peptide spans 1–28 (MGICLMKRCCSWFLLISFLSALTNENEA). Residues 29 to 236 (ISPDGEALLS…TGQGGNNPKR (208 aa)) are Extracellular-facing. LRR repeat units lie at residues 72–96 (TKRV…LGKL), 97–120 (DQLR…LGNC), 122–144 (ALEG…IGNL), 145–168 (SGLK…LGQL), and 170–193 (RLTK…LLAR). 2 N-linked (GlcNAc...) asparagine glycosylation sites follow: Asn119 and Asn143. 3 N-linked (GlcNAc...) asparagine glycosylation sites follow: Asn175, Asn215, and Asn219. A helical membrane pass occupies residues 237–257 (LLISASATVGGLLLVALMCFW). Residues 258-589 (GCFLYKKLGR…PSDFYDSSSD (332 aa)) lie on the Cytoplasmic side of the membrane. A Protein kinase domain is found at 304–576 (LNEEHIIGCG…VVQLLESEVM (273 aa)). Residues 310–318 (IGCGGFGTV) and Lys332 each bind ATP. Ser384 bears the Phosphoserine mark. Catalysis depends on Asp427, which acts as the Proton acceptor. Phosphothreonine is present on residues Thr460, Thr461, and Thr466. Tyr474 bears the Phosphotyrosine mark.

It belongs to the protein kinase superfamily. Ser/Thr protein kinase family. Interacts with the ACC synthases ACS5 and ACS9 but not ACS2, via the kinase domain. Post-translationally, autophosphorylated. Expressed in the root meristem and elongation zone, and in hypocotyls of etiolated seedlings.

Its subcellular location is the cell membrane. It catalyses the reaction L-seryl-[protein] + ATP = O-phospho-L-seryl-[protein] + ADP + H(+). The catalysed reaction is L-threonyl-[protein] + ATP = O-phospho-L-threonyl-[protein] + ADP + H(+). Its function is as follows. Involved in the signaling pathway that regulates cell wall function, including cellulose biosynthesis, likely via an 1-aminocyclopropane-1-carboxylic acid (ACC)-mediated signal (a precursor of ethylene). This chain is LRR receptor-like serine/threonine-protein kinase FEI 2 (FEI2), found in Arabidopsis thaliana (Mouse-ear cress).